The primary structure comprises 839 residues: DNA gyrase subunit A (839 aa).

Residues 46–510 enclose the Topo IIA-type catalytic domain; sequence LPDARDGLKP…ISEDIDDEDL (465 aa). Y134 functions as the O-(5'-phospho-DNA)-tyrosine intermediate in the catalytic mechanism. The GyrA-box motif lies at 537 to 543; it reads QHRGGVG.

This sequence belongs to the type II topoisomerase GyrA/ParC subunit family. In terms of assembly, heterotetramer, composed of two GyrA and two GyrB chains. In the heterotetramer, GyrA contains the active site tyrosine that forms a transient covalent intermediate with DNA, while GyrB binds cofactors and catalyzes ATP hydrolysis.

The protein resides in the cytoplasm. It catalyses the reaction ATP-dependent breakage, passage and rejoining of double-stranded DNA.. Functionally, a type II topoisomerase that negatively supercoils closed circular double-stranded (ds) DNA in an ATP-dependent manner to modulate DNA topology and maintain chromosomes in an underwound state. Negative supercoiling favors strand separation, and DNA replication, transcription, recombination and repair, all of which involve strand separation. Also able to catalyze the interconversion of other topological isomers of dsDNA rings, including catenanes and knotted rings. Type II topoisomerases break and join 2 DNA strands simultaneously in an ATP-dependent manner. The sequence is that of DNA gyrase subunit A from Mycoplasma pneumoniae (strain ATCC 29342 / M129 / Subtype 1) (Mycoplasmoides pneumoniae).